A 179-amino-acid chain; its full sequence is Large ribosomal subunit protein uL5 (179 aa).

The protein belongs to the universal ribosomal protein uL5 family. As to quaternary structure, part of the 50S ribosomal subunit; part of the 5S rRNA/L5/L18/L25 subcomplex. Contacts the 5S rRNA and the P site tRNA. Forms a bridge to the 30S subunit in the 70S ribosome.

This is one of the proteins that bind and probably mediate the attachment of the 5S RNA into the large ribosomal subunit, where it forms part of the central protuberance. In the 70S ribosome it contacts protein S13 of the 30S subunit (bridge B1b), connecting the 2 subunits; this bridge is implicated in subunit movement. Contacts the P site tRNA; the 5S rRNA and some of its associated proteins might help stabilize positioning of ribosome-bound tRNAs. The polypeptide is Large ribosomal subunit protein uL5 (Dehalococcoides mccartyi (strain ATCC BAA-2100 / JCM 16839 / KCTC 5957 / BAV1)).